The chain runs to 457 residues: Vasoactive intestinal polypeptide receptor (457 aa).

The signal sequence occupies residues 1–19 (MGLVEVVWWWRWRFGGGGG). The Extracellular portion of the chain corresponds to 20-141 (GLVVEVEVWW…KEQTAFYGTV (122 aa)). 3 disulfide bridges follow: cysteine 51–cysteine 73, cysteine 64–cysteine 105, and cysteine 87–cysteine 122. N-linked (GlcNAc...) asparagine glycans are attached at residues asparagine 59, asparagine 70, asparagine 100, and asparagine 104. Residues 142–166 (KTGYTIGHTLSLIALTAAMIILCLF) traverse the membrane as a helical segment. The Cytoplasmic portion of the chain corresponds to 167–173 (RKLHCTR). The helical transmembrane segment at 174 to 193 (NYIHMHLFMSFIMRAIAVFI) threads the bilayer. Residues 194-215 (KDVTLFESGEPEHCFVSSVGCK) are Extracellular-facing. Cysteine 214 and cysteine 284 are joined by a disulfide. The chain crosses the membrane as a helical span at residues 216-239 (AMMVFFQYCVMANFFWLLVEGLYL). The Cytoplasmic segment spans residues 240 to 253 (HTLLVISFFSERKY). Residues 254 to 275 (FWWYILIGWGAPSVFITAWTVV) form a helical membrane-spanning segment. The Extracellular segment spans residues 276–292 (RIYFFNVGCWEEIIESP). The chain crosses the membrane as a helical span at residues 293-316 (IWWIIKTPILVSILVNFILFICII). At 317-341 (RILVQKLHSPDVGHNETSQYSRLAK) the chain is on the cytoplasmic side. The chain crosses the membrane as a helical span at residues 342 to 361 (STLLLIPLFGIHYIMFAFFP). At 362–373 (DNFKAQVKLVFE) the chain is on the extracellular side. A helical membrane pass occupies residues 374–393 (LVVGSFQGFVVAVLYCFLNG). The Cytoplasmic segment spans residues 394–457 (EVQAELKRKW…SSFQAEFSLV (64 aa)).

Belongs to the G-protein coupled receptor 2 family. Expressed in pituitary, hypothalamus, small intestine and ovarian follicles.

It localises to the cell membrane. In terms of biological role, this is a receptor for VIP. The activity of this receptor is mediated by G proteins which activate adenylyl cyclase. The protein is Vasoactive intestinal polypeptide receptor (VIPR1) of Meleagris gallopavo (Wild turkey).